We begin with the raw amino-acid sequence, 434 residues long: Glutamate-1-semialdehyde 2,1-aminomutase 1 (434 aa).

Residue K270 is modified to N6-(pyridoxal phosphate)lysine.

The protein belongs to the class-III pyridoxal-phosphate-dependent aminotransferase family. HemL subfamily. Homodimer. Pyridoxal 5'-phosphate is required as a cofactor.

The protein resides in the cytoplasm. It catalyses the reaction (S)-4-amino-5-oxopentanoate = 5-aminolevulinate. The protein operates within porphyrin-containing compound metabolism; protoporphyrin-IX biosynthesis; 5-aminolevulinate from L-glutamyl-tRNA(Glu): step 2/2. The protein is Glutamate-1-semialdehyde 2,1-aminomutase 1 of Bacillus cereus (strain ATCC 10987 / NRS 248).